A 425-amino-acid polypeptide reads, in one-letter code: Adenosylhomocysteinase (425 aa).

3 residues coordinate substrate: T60, D132, and E157. 158–160 is a binding site for NAD(+); that stretch reads TTT. The substrate site is built by K187 and D191. NAD(+)-binding positions include N192, 221–226, E244, N279, 300–302, and N347; these read GYGWCG and SGH.

Belongs to the adenosylhomocysteinase family. The cofactor is NAD(+).

The protein localises to the cytoplasm. The catalysed reaction is S-adenosyl-L-homocysteine + H2O = L-homocysteine + adenosine. The protein operates within amino-acid biosynthesis; L-homocysteine biosynthesis; L-homocysteine from S-adenosyl-L-homocysteine: step 1/1. Functionally, may play a key role in the regulation of the intracellular concentration of adenosylhomocysteine. This Synechocystis sp. (strain ATCC 27184 / PCC 6803 / Kazusa) protein is Adenosylhomocysteinase.